A 117-amino-acid chain; its full sequence is Large ribosomal subunit protein bL20c (117 aa).

This sequence belongs to the bacterial ribosomal protein bL20 family.

The protein resides in the plastid. Its subcellular location is the chloroplast. In terms of biological role, binds directly to 23S ribosomal RNA and is necessary for the in vitro assembly process of the 50S ribosomal subunit. It is not involved in the protein synthesizing functions of that subunit. This Phalaenopsis aphrodite subsp. formosana (Moth orchid) protein is Large ribosomal subunit protein bL20c.